Reading from the N-terminus, the 204-residue chain is Elongation factor Ts (204 aa).

The segment at 87 to 90 (TDFV) is involved in Mg(2+) ion dislocation from EF-Tu.

This sequence belongs to the EF-Ts family.

It localises to the cytoplasm. Its function is as follows. Associates with the EF-Tu.GDP complex and induces the exchange of GDP to GTP. It remains bound to the aminoacyl-tRNA.EF-Tu.GTP complex up to the GTP hydrolysis stage on the ribosome. The protein is Elongation factor Ts of Frankia alni (strain DSM 45986 / CECT 9034 / ACN14a).